We begin with the raw amino-acid sequence, 270 residues long: Coiled-coil domain-containing protein 3 (270 aa).

The signal sequence occupies residues 1–21 (MLRQLLLAALCLAGPPAPARA). Asn-100 carries N-linked (GlcNAc...) asparagine glycosylation. Residues 188–251 (SVQKALFEEE…NQKLSEKLAA (64 aa)) adopt a coiled-coil conformation.

As to quaternary structure, homodimer. In terms of tissue distribution, expressed in umbilical vein endothelial cells (HUVEC), and at lower levels in aortic smooth muscle cells (HASMC).

It is found in the secreted. Negatively regulates TNF-alpha-induced pro-inflammatory response in endothelial cells (ECs) via inhibition of TNF-alpha-induced NF-kappaB activation in ECs. Positively regulates lipid accumulation in adipose cells. In Homo sapiens (Human), this protein is Coiled-coil domain-containing protein 3 (CCDC3).